Consider the following 315-residue polypeptide: MKNEDGKLKAMIFDIQSFSTHDGPGIRTNVFFKGCTLRCPWCANPESQKGNPQLLYTKMKCIGCMCCARACPYGAVSAITDPDEIKRVGYVHHDRSKCDKCTTHECLSACFQEALSIAGELMTVDDVMKKIDRDAVVYRNKGGVTVSGGDPLLHPDFLEELLCRCHEKAYNVALESELCVPTKNLERVMPYIDYYYTDCKIIDPVEHKRITGVSNDIILKNLRLIGERCPERMVLRTPIIPGFTDSDENIDGIASFAAECHFPTMNILPYHKLGVTKHERLGSTYQLPNVQPPSDAQMHHLADIIEAHGVKCIIN.

Residues H21 to K311 form the Radical SAM core domain. [4Fe-4S] cluster is bound by residues C35, C39, C42, C61, C64, C67, C71, C98, C101, C106, and C110. 4Fe-4S ferredoxin-type domains follow at residues P52–D81 and G89–E120. S-adenosyl-L-methionine is bound by residues G149, D198 to K200, and H271.

This sequence belongs to the organic radical-activating enzymes family. The cofactor is [4Fe-4S] cluster.

It catalyses the reaction glycyl-[protein] + reduced [flavodoxin] + S-adenosyl-L-methionine = glycin-2-yl radical-[protein] + semiquinone [flavodoxin] + 5'-deoxyadenosine + L-methionine + H(+). Catalyzes activation of the indoleacetate decarboxylase OsIAD under anaerobic conditions by generation of an organic free radical on a glycine residue, via a homolytic cleavage of S-adenosyl-L-methionine (SAM). The sequence is that of Indoleacetate decarboxylase activating enzyme from Tractidigestivibacter scatoligenes (Olsenella scatoligenes).